The following is a 39-amino-acid chain: Gonadal protein gdl-ORF39 (39 aa).

In terms of tissue distribution, in bundles of maturing sperm of larval, pupal and adult males.

The protein is Gonadal protein gdl-ORF39 (gdl-ORF39) of Drosophila melanogaster (Fruit fly).